The chain runs to 123 residues: Immunoglobulin lambda variable 5-39 (123 aa).

An N-terminal signal peptide occupies residues 1 to 19 (MAWTPLLLLLLSHCTGSLS). The interval 20-44 (QPVLTQPTSLSASPGASARFTCTLR) is framework-1. The Ig-like domain occupies 21–123 (PVLTQPTSLS…YCAIWYSSTS (103 aa)). Cysteine 41 and cysteine 115 are disulfide-bonded. The tract at residues 45 to 53 (SGINVGTYR) is complementarity-determining-1. The framework-2 stretch occupies residues 54 to 70 (IYWYQQKPGSLPRYLLR). The tract at residues 71–77 (YKSDSDK) is complementarity-determining-2. Residues 78 to 115 (QQGSGVPSRFSGSKDASTNAGLLLISGLQSEDEADYYC) form a framework-3 region. Residues 116–123 (AIWYSSTS) form a complementarity-determining-3 region.

Immunoglobulins are composed of two identical heavy chains and two identical light chains; disulfide-linked.

It is found in the secreted. It localises to the cell membrane. Functionally, v region of the variable domain of immunoglobulin light chains that participates in the antigen recognition. Immunoglobulins, also known as antibodies, are membrane-bound or secreted glycoproteins produced by B lymphocytes. In the recognition phase of humoral immunity, the membrane-bound immunoglobulins serve as receptors which, upon binding of a specific antigen, trigger the clonal expansion and differentiation of B lymphocytes into immunoglobulins-secreting plasma cells. Secreted immunoglobulins mediate the effector phase of humoral immunity, which results in the elimination of bound antigens. The antigen binding site is formed by the variable domain of one heavy chain, together with that of its associated light chain. Thus, each immunoglobulin has two antigen binding sites with remarkable affinity for a particular antigen. The variable domains are assembled by a process called V-(D)-J rearrangement and can then be subjected to somatic hypermutations which, after exposure to antigen and selection, allow affinity maturation for a particular antigen. This Homo sapiens (Human) protein is Immunoglobulin lambda variable 5-39.